The sequence spans 317 residues: Transcriptional activator protein med (317 aa).

Positions 1–17 are cleaved as a signal peptide; that stretch reads MITRLVMIFSVLLLLSG. The N-palmitoyl cysteine moiety is linked to residue Cys-18. Cys-18 carries the S-diacylglycerol cysteine lipid modification.

It belongs to the BMP lipoprotein family.

The protein resides in the cell membrane. Functionally, positive activator of the comK gene. In Bacillus subtilis (strain 168), this protein is Transcriptional activator protein med (med).